Consider the following 141-residue polypeptide: Large ribosomal subunit protein uL16 (141 aa).

This sequence belongs to the universal ribosomal protein uL16 family. Part of the 50S ribosomal subunit.

Functionally, binds 23S rRNA and is also seen to make contacts with the A and possibly P site tRNAs. The polypeptide is Large ribosomal subunit protein uL16 (Microchaete diplosiphon (Fremyella diplosiphon)).